We begin with the raw amino-acid sequence, 342 residues long: L-threonine 3-dehydrogenase (342 aa).

Cys38 lines the Zn(2+) pocket. Catalysis depends on charge relay system residues Thr40 and His43. The Zn(2+) site is built by His63, Glu64, Cys93, Cys96, Cys99, and Cys107. Residues Ile175, Asp195, Arg200, 262–264, and 286–287 contribute to the NAD(+) site; these read LGL and IY.

Belongs to the zinc-containing alcohol dehydrogenase family. In terms of assembly, homotetramer. Zn(2+) serves as cofactor.

The protein resides in the cytoplasm. The catalysed reaction is L-threonine + NAD(+) = (2S)-2-amino-3-oxobutanoate + NADH + H(+). Its pathway is amino-acid degradation; L-threonine degradation via oxydo-reductase pathway; glycine from L-threonine: step 1/2. In terms of biological role, catalyzes the NAD(+)-dependent oxidation of L-threonine to 2-amino-3-ketobutyrate. This Streptomyces avermitilis (strain ATCC 31267 / DSM 46492 / JCM 5070 / NBRC 14893 / NCIMB 12804 / NRRL 8165 / MA-4680) protein is L-threonine 3-dehydrogenase.